Consider the following 757-residue polypeptide: Catalase-peroxidase (757 aa).

Positions 101–248 (WHSAGTYRIG…LAAVQMGLIY (148 aa)) form a cross-link, tryptophyl-tyrosyl-methioninium (Trp-Tyr) (with M-274). Catalysis depends on histidine 102, which acts as the Proton acceptor. The tract at residues 210–231 (SEGVHHPDEHSGAKEKASKNSD) is disordered. A compositionally biased stretch (basic and acidic residues) spans 212 to 231 (GVHHPDEHSGAKEKASKNSD). A cross-link (tryptophyl-tyrosyl-methioninium (Tyr-Met) (with W-101)) is located at residues 248 to 274 (YVNPEGPDGRPDPLASARDIRETFARM). Residue histidine 289 coordinates heme b. Positions 293-312 (KTHGAAPADNVGPEPEAGEL) are disordered.

It belongs to the peroxidase family. Peroxidase/catalase subfamily. Homodimer or homotetramer. Heme b is required as a cofactor. Formation of the three residue Trp-Tyr-Met cross-link is important for the catalase, but not the peroxidase activity of the enzyme.

It catalyses the reaction H2O2 + AH2 = A + 2 H2O. It carries out the reaction 2 H2O2 = O2 + 2 H2O. Functionally, bifunctional enzyme with both catalase and broad-spectrum peroxidase activity. The sequence is that of Catalase-peroxidase from Xylella fastidiosa (strain M12).